We begin with the raw amino-acid sequence, 424 residues long: Enolase (424 aa).

Glutamine 163 provides a ligand contact to (2R)-2-phosphoglycerate. Glutamate 205 acts as the Proton donor in catalysis. 3 residues coordinate Mg(2+): aspartate 242, glutamate 285, and aspartate 312. The (2R)-2-phosphoglycerate site is built by lysine 337, arginine 366, serine 367, and lysine 388. Lysine 337 (proton acceptor) is an active-site residue.

Belongs to the enolase family. It depends on Mg(2+) as a cofactor.

Its subcellular location is the cytoplasm. The protein localises to the secreted. The protein resides in the cell surface. The catalysed reaction is (2R)-2-phosphoglycerate = phosphoenolpyruvate + H2O. It participates in carbohydrate degradation; glycolysis; pyruvate from D-glyceraldehyde 3-phosphate: step 4/5. Catalyzes the reversible conversion of 2-phosphoglycerate (2-PG) into phosphoenolpyruvate (PEP). It is essential for the degradation of carbohydrates via glycolysis. In Roseobacter denitrificans (strain ATCC 33942 / OCh 114) (Erythrobacter sp. (strain OCh 114)), this protein is Enolase.